A 204-amino-acid chain; its full sequence is DNA polymerase epsilon subunit D (204 aa).

Residues 165 to 177 (KEVQRRRAEKTPA) show a composition bias toward basic and acidic residues. Residues 165 to 204 (KEVQRRRAEKTPAADEGQAEEGDAADEEEGSHKRAKLDEH) are disordered. A compositionally biased stretch (acidic residues) spans 181–193 (GQAEEGDAADEEE). Residues 194 to 204 (GSHKRAKLDEH) show a composition bias toward basic and acidic residues.

As to quaternary structure, heterotetramer. Consists of four subunits: POL2, DPB2, DPB3 and DPB4.

It localises to the nucleus. In terms of biological role, as accessory component of the DNA polymerase epsilon (DNA polymerase II) participates in chromosomal DNA replication. The chain is DNA polymerase epsilon subunit D (DPB4) from Eremothecium gossypii (strain ATCC 10895 / CBS 109.51 / FGSC 9923 / NRRL Y-1056) (Yeast).